Here is a 111-residue protein sequence, read N- to C-terminus: MSKLLETLEEEKTVEQKPRSQEEEDHQDSSKKEELLESLCTPTSSDHKIPEVETCPPPPRKRPREISLTKKTRLSKDLRFFEATDVGSQEVETLFVHEPNHVRKKRRSNSA.

The tract at residues 1-66 (MSKLLETLEE…PPPRKRPREI (66 aa)) is disordered. Residues 10–35 (EEKTVEQKPRSQEEEDHQDSSKKEEL) show a composition bias toward basic and acidic residues.

In terms of assembly, interacts with CYCD2-1. Interacts with CDKB1-1. As to expression, expressed at low levels in roots and stems. Expressed in the root vascular tissue.

The protein resides in the nucleus. Cyclin-dependent protein kinase (CDK) inhibitor that restricts cell proliferation and cooperates with SIM and SMR1 to promote endoreplication during leaf development. This Arabidopsis thaliana (Mouse-ear cress) protein is Cyclin-dependent protein kinase inhibitor SMR2.